We begin with the raw amino-acid sequence, 404 residues long: Cysteine desulfurase IscS (404 aa).

Residues 75–76 (AT), Asn-155, Gln-183, and 203–205 (SAH) contribute to the pyridoxal 5'-phosphate site. Position 206 is an N6-(pyridoxal phosphate)lysine (Lys-206). Thr-243 provides a ligand contact to pyridoxal 5'-phosphate. The active-site Cysteine persulfide intermediate is Cys-328. Cys-328 is a [2Fe-2S] cluster binding site.

This sequence belongs to the class-V pyridoxal-phosphate-dependent aminotransferase family. NifS/IscS subfamily. Homodimer. Forms a heterotetramer with IscU, interacts with other sulfur acceptors. It depends on pyridoxal 5'-phosphate as a cofactor.

Its subcellular location is the cytoplasm. The catalysed reaction is (sulfur carrier)-H + L-cysteine = (sulfur carrier)-SH + L-alanine. Its pathway is cofactor biosynthesis; iron-sulfur cluster biosynthesis. In terms of biological role, master enzyme that delivers sulfur to a number of partners involved in Fe-S cluster assembly, tRNA modification or cofactor biosynthesis. Catalyzes the removal of elemental sulfur atoms from cysteine to produce alanine. Functions as a sulfur delivery protein for Fe-S cluster synthesis onto IscU, an Fe-S scaffold assembly protein, as well as other S acceptor proteins. The sequence is that of Cysteine desulfurase IscS from Vibrio vulnificus (strain CMCP6).